We begin with the raw amino-acid sequence, 369 residues long: Succinyl-diaminopimelate desuccinylase (369 aa).

Histidine 77 is a Zn(2+) binding site. Residue aspartate 79 is part of the active site. Aspartate 103 is a Zn(2+) binding site. Glutamate 136 functions as the Proton acceptor in the catalytic mechanism. 3 residues coordinate Zn(2+): glutamate 137, glutamate 165, and histidine 345.

This sequence belongs to the peptidase M20A family. The cofactor is Zn(2+). Co(2+) is required as a cofactor.

The catalysed reaction is N-succinyl-(2S,6S)-2,6-diaminopimelate + H2O = (2S,6S)-2,6-diaminopimelate + succinate. It participates in amino-acid biosynthesis; L-lysine biosynthesis via DAP pathway; LL-2,6-diaminopimelate from (S)-tetrahydrodipicolinate (succinylase route): step 3/3. The chain is Succinyl-diaminopimelate desuccinylase (dapE) from Corynebacterium glutamicum (strain ATCC 13032 / DSM 20300 / JCM 1318 / BCRC 11384 / CCUG 27702 / LMG 3730 / NBRC 12168 / NCIMB 10025 / NRRL B-2784 / 534).